A 964-amino-acid chain; its full sequence is Lon protease homolog, mitochondrial (964 aa).

The 212-residue stretch at 89-300 (VIALPLPHRP…LTLELVKKEM (212 aa)) folds into the Lon N-terminal domain. Residue 455 to 462 (GPPGVGKT) coordinates ATP. Residues 663–740 (GVSNEPDHES…TSKGNKGTDG (78 aa)) form a disordered region. Over residues 673–687 (VSASVTEESGNGDNT) the composition is skewed to polar residues. Basic and acidic residues predominate over residues 688 to 698 (TTKDEILKDPA). The span at 703–712 (SVTNNVTNPA) shows a compositional bias: polar residues. In terms of domain architecture, Lon proteolytic spans 773 to 957 (HTPVGVVMGL…SEIYDLAFQS (185 aa)). Residues serine 863 and lysine 906 contribute to the active site.

Belongs to the peptidase S16 family. In terms of assembly, homoheptamer. Organized in a ring with a central cavity.

It is found in the mitochondrion matrix. It carries out the reaction Hydrolysis of proteins in presence of ATP.. ATP-dependent serine protease that mediates the selective degradation of misfolded, unassembled or oxidatively damaged polypeptides as well as certain short-lived regulatory proteins in the mitochondrial matrix. May also have a chaperone function in the assembly of inner membrane protein complexes. Participates in the regulation of mitochondrial gene expression and in the maintenance of the integrity of the mitochondrial genome. Binds to mitochondrial DNA in a site-specific manner. The polypeptide is Lon protease homolog, mitochondrial (LON2) (Zea mays (Maize)).